The chain runs to 574 residues: Sulfate adenylyltransferase (574 aa).

The segment at 1 to 169 (MANPPHGGVL…IEAINKLNHY (169 aa)) is N-terminal. The segment at 170–394 (DYVALRYTPA…LRESSPPRHT (225 aa)) is catalytic. Residue Gln197 participates in sulfate binding. ATP contacts are provided by residues 197–200 (QTRN) and 291–294 (GRDH). Catalysis depends on residues Thr198, Arg199, and Asn200. Arg199 contributes to the sulfate binding site. Ala295 is a sulfate binding site. Val333 contacts ATP. Positions 395 to 574 (QGFTIFLTGY…LETEGFFDRS (180 aa)) are allosteric regulation domain; adenylyl-sulfate kinase-like. 3'-phosphoadenylyl sulfate-binding positions include 434 to 437 (DTVR), Arg451, 477 to 478 (IA), and Arg516.

It in the N-terminal section; belongs to the sulfate adenylyltransferase family. In the C-terminal section; belongs to the APS kinase family. As to quaternary structure, homohexamer. Dimer of trimers.

Its subcellular location is the cytoplasm. The catalysed reaction is sulfate + ATP + H(+) = adenosine 5'-phosphosulfate + diphosphate. It functions in the pathway sulfur metabolism; hydrogen sulfide biosynthesis; sulfite from sulfate: step 1/3. With respect to regulation, allosterically inhibited by 3'-phosphoadenosine 5'-phosphosulfate (PAPS). Its function is as follows. Catalyzes the first intracellular reaction of sulfate assimilation, forming adenosine-5'-phosphosulfate (APS) from inorganic sulfate and ATP. Plays an important role in sulfate activation as a component of the biosynthesis pathway of sulfur-containing amino acids. The polypeptide is Sulfate adenylyltransferase (Aspergillus fumigatus (strain ATCC MYA-4609 / CBS 101355 / FGSC A1100 / Af293) (Neosartorya fumigata)).